Here is a 136-residue protein sequence, read N- to C-terminus: Putative LysR family substrate binding domain-containing protein YagP (136 aa).

Belongs to the LysR transcriptional regulatory family.

The chain is Putative LysR family substrate binding domain-containing protein YagP (yagP) from Escherichia coli (strain K12).